Consider the following 148-residue polypeptide: Transcriptional regulator MraZ (148 aa).

SpoVT-AbrB domains lie at 5–53 (ETAI…AESE) and 82–125 (AAHL…SEQA).

This sequence belongs to the MraZ family. Forms oligomers.

It is found in the cytoplasm. The protein localises to the nucleoid. This is Transcriptional regulator MraZ from Stenotrophomonas maltophilia (strain R551-3).